Reading from the N-terminus, the 289-residue chain is Palmitoyl-protein thioesterase 3 (289 aa).

Residues 1–20 (MRILSSLILLIALAIALVSA) form the signal peptide. Residue serine 97 is part of the active site. Residues asparagine 189 and asparagine 195 are each glycosylated (N-linked (GlcNAc...) asparagine). Residues aspartate 210 and histidine 266 contribute to the active site. N-linked (GlcNAc...) asparagine glycosylation occurs at asparagine 281.

Belongs to the palmitoyl-protein thioesterase family.

It localises to the lysosome. It catalyses the reaction S-hexadecanoyl-L-cysteinyl-[protein] + H2O = L-cysteinyl-[protein] + hexadecanoate + H(+). Its function is as follows. Removes thioester-linked fatty acyl groups such as palmitate from modified cysteine residues in proteins or peptides during lysosomal degradation. The protein is Palmitoyl-protein thioesterase 3 (ppt3) of Dictyostelium discoideum (Social amoeba).